Consider the following 235-residue polypeptide: Ubiquinone/menaquinone biosynthesis C-methyltransferase UbiE (235 aa).

S-adenosyl-L-methionine contacts are provided by threonine 60 and aspartate 81.

The protein belongs to the class I-like SAM-binding methyltransferase superfamily. MenG/UbiE family.

The enzyme catalyses a 2-demethylmenaquinol + S-adenosyl-L-methionine = a menaquinol + S-adenosyl-L-homocysteine + H(+). It catalyses the reaction a 2-methoxy-6-(all-trans-polyprenyl)benzene-1,4-diol + S-adenosyl-L-methionine = a 5-methoxy-2-methyl-3-(all-trans-polyprenyl)benzene-1,4-diol + S-adenosyl-L-homocysteine + H(+). It functions in the pathway quinol/quinone metabolism; menaquinone biosynthesis; menaquinol from 1,4-dihydroxy-2-naphthoate: step 2/2. Its pathway is cofactor biosynthesis; ubiquinone biosynthesis. Methyltransferase required for the conversion of demethylmenaquinol (DMKH2) to menaquinol (MKH2) and the conversion of 2-polyprenyl-6-methoxy-1,4-benzoquinol (DDMQH2) to 2-polyprenyl-3-methyl-6-methoxy-1,4-benzoquinol (DMQH2). The protein is Ubiquinone/menaquinone biosynthesis C-methyltransferase UbiE of Geotalea daltonii (strain DSM 22248 / JCM 15807 / FRC-32) (Geobacter daltonii).